A 928-amino-acid polypeptide reads, in one-letter code: Nitrogen network kinase 1 (928 aa).

A compositionally biased stretch (polar residues) spans Met1–Gly12. Disordered stretches follow at residues Met1–Arg43 and His81–Gly118. Residues Ser13–Ser29 are compositionally biased toward low complexity. Composition is skewed to polar residues over residues Pro30–Ser40 and Arg86–Asn107. Phosphoserine occurs at positions 178 and 179. Residues Ala374–Asn394 are disordered. The span at Asn375 to Thr391 shows a compositional bias: low complexity. A phosphoserine mark is found at Ser405 and Ser426. The 464-residue stretch at His449–Leu912 folds into the Protein kinase domain. ATP contacts are provided by residues Ile455–Ile463 and Lys478. The Proton acceptor role is filled by Asp580. 2 disordered regions span residues Glu670–Gly741 and Tyr767–Ser813. Residues Val683 to Pro696 are compositionally biased toward polar residues. At Ser737 the chain carries Phosphoserine. The residue at position 739 (Tyr739) is a Phosphotyrosine. A compositionally biased stretch (low complexity) spans Ser769–Ser813.

Belongs to the protein kinase superfamily. Ser/Thr protein kinase family. Interacts with URE2 and GDH2. Also interacts with the TORC1 kinase complex.

Its subcellular location is the cytoplasm. The enzyme catalyses L-seryl-[protein] + ATP = O-phospho-L-seryl-[protein] + ADP + H(+). It catalyses the reaction L-threonyl-[protein] + ATP = O-phospho-L-threonyl-[protein] + ADP + H(+). In terms of biological role, serine/threonine-protein kinase involved in the phosphorylation of the NAD(+)-dependent glutamate dehydrogenase GDH2. When overexpressed, confers hypersensitivity to rapamycin and induces rapid nuclear accumulation of GLN3 to activate the transcription of nitrogen-regulated genes. The protein is Nitrogen network kinase 1 (NNK1) of Saccharomyces cerevisiae (strain ATCC 204508 / S288c) (Baker's yeast).